Consider the following 416-residue polypeptide: Elongation factor 1-gamma 3 (416 aa).

One can recognise a GST N-terminal domain in the interval 1-82; that stretch reads MALVLHCGSG…YVARLKDNSS (82 aa). One can recognise a GST C-terminal domain in the interval 87 to 215; sequence SLIDYSHIEQ…FKQAESVPPV (129 aa). The interval 213–263 is disordered; it reads PPVQKKAAPPKESKAKEAKKEAPKEAPKPKVEASEEEEAPKPKPKNPLDLL. Basic and acidic residues predominate over residues 221–245; it reads PPKESKAKEAKKEAPKEAPKPKVEA. The EF-1-gamma C-terminal domain occupies 256-416; the sequence is PKNPLDLLPP…EDLLDAKCFK (161 aa).

In terms of assembly, EF-1 is composed of four subunits: alpha, beta, delta, and gamma.

Probably plays a role in anchoring the complex to other cellular components. This is Elongation factor 1-gamma 3 from Oryza sativa subsp. japonica (Rice).